The sequence spans 356 residues: Calcium/calmodulin-dependent protein kinase type 1 (356 aa).

Positions 2-7 match the Nuclear localization signal motif; the sequence is PLFKRR. The region spanning 22–278 is the Protein kinase domain; that stretch reads YDFRDVLGTG…CQSALEHPWI (257 aa). ATP contacts are provided by residues 28–36 and Lys-52; that span reads LGTGAFSKV. The Proton acceptor role is filled by Asp-144. Position 179 is a phosphothreonine; by ckk-1 (Thr-179). The tract at residues 278–318 is autoinhibitory domain; it reads ISGNTAYTHDIHRTVAVHLKKSLAKRNWKKAFNAAAAIRQL. The interval 298 to 319 is calmodulin-binding; the sequence is KSLAKRNWKKAFNAAAAIRQLQ.

Belongs to the protein kinase superfamily. CAMK Ser/Thr protein kinase family. CaMK subfamily. Mg(2+) is required as a cofactor.

The protein localises to the nucleus. Its subcellular location is the cytoplasm. It catalyses the reaction L-seryl-[protein] + ATP = O-phospho-L-seryl-[protein] + ADP + H(+). It carries out the reaction L-threonyl-[protein] + ATP = O-phospho-L-threonyl-[protein] + ADP + H(+). Its activity is regulated as follows. Activated by Ca(2+)/calmodulin. Binding of calmodulin results in a conformational change that generates functional binding sites for both substrate and ATP, and thus relieves autoinhibition and lowers the Km of substrate binding. Must be phosphorylated by ckk-1 to be maximally active but this does not appear to be required for activity in AFD neurons. Functionally, calcium/calmodulin-dependent protein kinase that operates in the calcium-triggered CaMKK-CaMK1 signaling cascade which results in transcriptional activation. Transcriptional activation occurs at least in part through phosphorylation of crh-1. Regulates gene expression, sensory morphology, and function of the AFD thermosensory neurons. Involved in long-term adaptation of AFD neurons to temperatures warmer than the initial acclimatized cultivation temperature. Acts in the FLP thermal nociceptors to moderate the responsiveness to noxious heat and controls neuropeptide release from FLP neurons in response to temperature elevations. Regulates the dauer decision, the decision of the larvae to enter into the alternative stress-resistant and long-lived dauer developmental stage, based on the feeding state, primarily in the AWC sensory neurons. Acts non cell-autonomously in the AWC neurons to regulate expression of the daf-28 insulin-like peptide and cell-autonomously in the ASI sensory neurons to regulate expression of the growth promoting daf-7 in a food-regulated manner. Plays a role in memory-based thermal response of an individual AFD neuron cell. Involved in chemotaxis response in AWC neurons to attractant 2-heptanone, a volatile organic compound emitted by the nematode pathogenic bacterium B.nematocida B16. Represses transcription of glutamate receptor glr-1 in the nucleus basally and in response to change in synaptic activity. The sequence is that of Calcium/calmodulin-dependent protein kinase type 1 (cmk-1) from Caenorhabditis briggsae.